A 125-amino-acid chain; its full sequence is Small ribosomal subunit protein uS12m (125 aa).

The protein belongs to the universal ribosomal protein uS12 family. Component of the mitochondrial ribosome small subunit.

It is found in the mitochondrion. Functionally, protein S12 is involved in the translation initiation step. The chain is Small ribosomal subunit protein uS12m (RPS12) from Arabidopsis thaliana (Mouse-ear cress).